The following is a 507-amino-acid chain: Hippocampus abundant transcript-like protein 1 (507 aa).

The tract at residues 1-27 (MSTDGESPEEPRWKAVASPKASTMPEK) is disordered. Topologically, residues 1 to 51 (MSTDGESPEEPRWKAVASPKASTMPEKRGSAQAASGSWLQGFGHPSVYHAA) are extracellular. A helical transmembrane segment spans residues 52–72 (FVIFLEFFAWGLLTTPMLTVL). The Cytoplasmic segment spans residues 73–84 (HETFPQHTFLMN). A helical transmembrane segment spans residues 85–105 (GLIQGVKGLLSFLSAPLIGAL). Topologically, residues 106-113 (SDVWGRKP) are extracellular. The helical transmembrane segment at 114 to 134 (FLLGTVFFTCFPIPLMRINPW) threads the bilayer. At 135 to 136 (WY) the chain is on the cytoplasmic side. Residues 137-157 (FGMISVSGVFSVTFSVIFAYV) form a helical membrane-spanning segment. At 158–170 (ADFTQEHERSTAY) the chain is on the extracellular side. A helical membrane pass occupies residues 171–191 (GWVSATFAASLVSSPAIGTYL). Over 192–198 (SANYGDS) the chain is Cytoplasmic. The helical transmembrane segment at 199–219 (LVVLVATLVALLDICFILIAV) threads the bilayer. Topologically, residues 220–257 (PESLSEKIRPASWGAQISWKQADPFASLKKVGKDSTVL) are extracellular. The chain crosses the membrane as a helical span at residues 258 to 278 (LICITVFLSYLPEAGQYSSFF). Over 279-283 (LYLRQ) the chain is Cytoplasmic. A helical membrane pass occupies residues 284–304 (VIGFGSVKIVAFIAMVGILSI). The Extracellular segment spans residues 305–323 (VAQTVFLSKLMRSLGNKNT). A helical membrane pass occupies residues 324 to 344 (VLLGLGFQMLQLAWYGFGSQA). Over 345–347 (WMM) the chain is Cytoplasmic. A helical membrane pass occupies residues 348–368 (WAAGTVAAMSSITFPAVSALI). The Extracellular portion of the chain corresponds to 369–389 (SRNAESDQQGVAQGIVTGIRG). Residues 390-410 (LCNGLGPALYGFIFYMFHVEL) traverse the membrane as a helical segment. Topologically, residues 411–430 (SELGPKLNSDDDPLQGAFIP) are cytoplasmic. Residues 431 to 451 (GPPFLFGACIVLMSFLVALFI) form a helical membrane-spanning segment. Over 452–507 (PEYRKTSGVQKHNNSTSGSLSTPPERGSDEDIEPLLQDSSIWELSFEEPGNQCTEL) the chain is Extracellular. The segment covering 459 to 473 (GVQKHNNSTSGSLST) has biased composition (polar residues). Residues 459-483 (GVQKHNNSTSGSLSTPPERGSDEDI) form a disordered region. N-linked (GlcNAc...) asparagine glycosylation is found at N464 and N465.

It belongs to the major facilitator superfamily.

The protein localises to the membrane. The chain is Hippocampus abundant transcript-like protein 1 from Mus musculus (Mouse).